We begin with the raw amino-acid sequence, 458 residues long: Paired box protein Pax-8 (458 aa).

The paired DNA-binding region spans 18-144 (GHGGLNQLGG…SSINRIIRTK (127 aa)). Residues 21–77 (GLNQLGGAFVNGRPLPEVVRQRIVDLAHQGVRPCDISRQLRVSHGCVSKILGRYYET) form a PAI subdomain region. The tract at residues 96 to 144 (KVVEKIGDYKRQNPTMFAWEIRDRLLAEGVCDNDTVPSVSSINRIIRTK) is RED subdomain. The disordered stretch occupies residues 198 to 217 (PGADGKRKLDDSDQESCRLS).

The protein localises to the nucleus. Its function is as follows. Probable transcription factor. Involved in kidney development, acting synergistically with lhx1/lim-1 to establish the pronephric primordium in late gastrulae/early neurulae. This chain is Paired box protein Pax-8, found in Xenopus tropicalis (Western clawed frog).